Consider the following 344-residue polypeptide: Meiotic recombination protein DMC1 homolog A (344 aa).

Residue 133–140 participates in ATP binding; sequence GEFRSGKT. R235 lines the dsDNA pocket. SsDNA contacts are provided by R235, F238, R241, R247, and R315. 2 residues coordinate dsDNA: R241 and R247.

Belongs to the RecA family. DMC1 subfamily. As to expression, expressed in meiotic young panicles.

It is found in the nucleus. Recombinase that may participate in meiotic recombination, specifically in homologous strand assimilation, which is required for the resolution of meiotic double-strand breaks. Exhibits DNA-dependent ATPase activity when bound to single-stranded DNA (ssDNA). Mediates renaturation of homologous complementary strands as well as assimilation of single strands into homologous supercoiled duplexes leading to D-loop formation. Binds circular single-stranded DNA (ssDNA) and circular double-stranded DNA (dsDNA) in vitro. Catalyzes DNA homologous renaturation and DNA strand exchange. The rates of these activities are dependent on the state of ATP hydrolysis. Forms helical filaments along ssDNA and dsDNA, and promotes strand exchange between ssDNA and dsDNA with long DNA substrates of several thousand base pairs. The presence of the replication protein A is not required for this activity. Seems to be required for homologous pairing and subsequent chromosome segregation during male meiosis. May be not directly required for homologous pairing during male meiosis. Required for synaptonemal complex assembly and crossover formation. Functions redundantly with DMC1B. This is Meiotic recombination protein DMC1 homolog A from Oryza sativa subsp. japonica (Rice).